A 633-amino-acid chain; its full sequence is DNA polymerase DpoZ (633 aa).

This sequence belongs to the DNA polymerase type-A family. DpoZ subfamily.

The enzyme catalyses DNA(n) + a 2'-deoxyribonucleoside 5'-triphosphate = DNA(n+1) + diphosphate. It carries out the reaction dZTP + DNA(n) = DNA(n)-Z + diphosphate. Functionally, DNA polymerase that preferentially incorporates the non-canonical base aminoadenine/dZTP instead of adenine into the synthesized DNA. More efficient in using dZTP instead of dATP as a substrate. In addition to this preference for dZTP, the phage also encodes a dATP triphosphohydrolase that removes dATP and its precursor dADP from the nucleotide pool of the host. This Vibrio phage phiVC8 protein is DNA polymerase DpoZ (dpoZ).